A 174-amino-acid chain; its full sequence is Ferredoxin-2, mitochondrial (174 aa).

The N-terminal 43 residues, 1–43 (MAASMARGVSARVLLRAAGGSWGPRAGHAAVTSRTFGTTGERR), are a transit peptide targeting the mitochondrion. The tract at residues 26–52 (AGHAAVTSRTFGTTGERRAGEEAADSP) is disordered. In terms of domain architecture, 2Fe-2S ferredoxin-type spans 59–161 (VNVVFVDRSG…GVEFALPKIT (103 aa)). [2Fe-2S] cluster contacts are provided by Cys96, Cys102, Cys105, and Cys142.

The protein belongs to the adrenodoxin/putidaredoxin family. In terms of assembly, component of the mitochondrial core iron-sulfur cluster (ISC) complex composed of NFS1, LYRM4, NDUFAB1, ISCU, FXN, and FDX2; this complex is a heterohexamer containing two copies of each monomer. Form a heterodimer complex with NFS1. Interacts (in both their reduced and oxidized states) with the cysteine desulfurase (NFS1:LYRM4) complex; this interaction stimulates cysteine desulfurase activity, and serves as a reductant for Fe-S cluster assembly. The cofactor is [2Fe-2S] cluster.

It localises to the mitochondrion. Its subcellular location is the mitochondrion matrix. Electron donor, of the core iron-sulfur cluster (ISC) assembly complex, that acts to reduce the persulfide into sulfide during [2Fe-2S] clusters assembly on the scaffolding protein ISCU. The core iron-sulfur cluster (ISC) assembly complex is involved in the de novo synthesis of a [2Fe-2S] cluster, the first step of the mitochondrial iron-sulfur protein biogenesis. This process is initiated by the cysteine desulfurase complex (NFS1:LYRM4:NDUFAB1) that produces persulfide which is delivered on the scaffold protein ISCU in a FXN-dependent manner. Then this complex is stabilized by FDX2 which provides reducing equivalents to accomplish the [2Fe-2S] cluster assembly. Finally, the [2Fe-2S] cluster is transferred from ISCU to chaperone proteins, including HSCB, HSPA9 and GLRX5. Essential for coenzyme Q biosynthesis: together with FDXR, transfers the electrons required for the hydroxylation reaction performed by COQ6. This is Ferredoxin-2, mitochondrial from Mus musculus (Mouse).